We begin with the raw amino-acid sequence, 370 residues long: Putative methylthioribose-1-phosphate isomerase (370 aa).

Residues 66 to 68, Arg-109, and Gln-217 each bind substrate; that span reads RGA. Catalysis depends on Asp-258, which acts as the Proton donor. Substrate is bound at residue 268–269; that stretch reads NK.

It belongs to the eIF-2B alpha/beta/delta subunits family. MtnA subfamily.

The enzyme catalyses 5-(methylsulfanyl)-alpha-D-ribose 1-phosphate = 5-(methylsulfanyl)-D-ribulose 1-phosphate. Functionally, catalyzes the interconversion of methylthioribose-1-phosphate (MTR-1-P) into methylthioribulose-1-phosphate (MTRu-1-P). The sequence is that of Putative methylthioribose-1-phosphate isomerase from Aeropyrum pernix (strain ATCC 700893 / DSM 11879 / JCM 9820 / NBRC 100138 / K1).